We begin with the raw amino-acid sequence, 509 residues long: Glycogen synthase (509 aa).

K47 is an ADP-alpha-D-glucose binding site.

Belongs to the glycosyltransferase 1 family. Bacterial/plant glycogen synthase subfamily.

It carries out the reaction [(1-&gt;4)-alpha-D-glucosyl](n) + ADP-alpha-D-glucose = [(1-&gt;4)-alpha-D-glucosyl](n+1) + ADP + H(+). Its pathway is glycan biosynthesis; glycogen biosynthesis. Its function is as follows. Synthesizes alpha-1,4-glucan chains using ADP-glucose. This is Glycogen synthase from Xanthomonas euvesicatoria pv. vesicatoria (strain 85-10) (Xanthomonas campestris pv. vesicatoria).